We begin with the raw amino-acid sequence, 219 residues long: Transcription factor MYB23 (219 aa).

HTH myb-type domains lie at 9-61 (EHEY…MNYL) and 62-116 (SPNV…SKKL). DNA-binding regions (H-T-H motif) lie at residues 37-61 (WNRIAKKTGLKRCGKSCRLRWMNYL) and 89-112 (WSLIAKRVPGRTDNQVKNYWNTHL).

In terms of assembly, interacts with BHLH2/EGL3/MYC146, BHLH12/MYC1 and GL3. As to expression, expressed in roots, seed coats, leaves, stems and flowers. Detected specifically in trichomes, and in the cell division and differentiation zone of the root.

Its subcellular location is the nucleus. Transcription activator, when associated with BHLH2/EGL3/MYC146 or BHLH12/MYC1. Regulates the epidermal cell fate specification. Mediates the formation of columellae and accumulation of mucilages on seed coats. Controls the elongation of epidermal cells positively in roots but negatively in stems, leading to the promotion of primary roots elongation and repression of leaves and stems elongation, respectively. Ovoids ectopic root-hair formation, probably by inducing GL2 in roots. Controls trichome initiation and branching. The protein is Transcription factor MYB23 (MYB23) of Arabidopsis thaliana (Mouse-ear cress).